Consider the following 216-residue polypeptide: HTH-type transcriptional regulator EthR (216 aa).

Residues 1-10 show a composition bias toward polar residues; sequence MTTSAASQAS. The segment at 1-24 is disordered; the sequence is MTTSAASQASLPRGRRTARPSGDD. Residues 23–83 form the HTH tetR-type domain; the sequence is DDRELAILAT…TLLDRVVNQA (61 aa). The H-T-H motif DNA-binding region spans 46-65; that stretch reads SVDDLAKGAGISRPTFYFYF.

As to quaternary structure, homodimer.

Its function is as follows. Involved in the repression of the monooxygenase EthA which is responsible of the formation of the active metabolite of ethionamide (ETH). The chain is HTH-type transcriptional regulator EthR (ethR) from Mycobacterium bovis (strain ATCC BAA-935 / AF2122/97).